A 312-amino-acid polypeptide reads, in one-letter code: Olfactory receptor 1500 (312 aa).

At 1-25 the chain is on the extracellular side; it reads MTGNNQTLILEFLLLGLPIPSEYHL. Asparagine 5 carries N-linked (GlcNAc...) asparagine glycosylation. A helical membrane pass occupies residues 26-49; that stretch reads LFYALFLAMYLTIILGNLLIIVLV. Topologically, residues 50 to 57 are cytoplasmic; that stretch reads RLDSHLHM. Residues 58 to 79 traverse the membrane as a helical segment; sequence PMYLFLSNLSFSDLCFSSVTMP. Residues 80–100 lie on the Extracellular side of the membrane; sequence KLLQNMQSQVPSISYTGCLTQ. Residues cysteine 97 and cysteine 189 are joined by a disulfide bond. A helical membrane pass occupies residues 101–120; the sequence is LYFFMVFGDMESFLLVVMAY. Topologically, residues 121-139 are cytoplasmic; the sequence is DRYVAICFPLRYTTIMSTK. A helical transmembrane segment spans residues 140-158; that stretch reads FCASLVLLLWMLTMTHALL. At 159-196 the chain is on the extracellular side; that stretch reads HTLLIARLSFCEKNVILHFFCDISALLKLSCSDIYVNE. The chain crosses the membrane as a helical span at residues 197–219; sequence LMIYILGGLIIIIPFLLIVMSYV. Over 220–236 the chain is Cytoplasmic; the sequence is RIFFSILKFPSIQDIYK. A helical membrane pass occupies residues 237–260; sequence VFSTCGSHLSVVTLFYGTIFGIYL. The Extracellular portion of the chain corresponds to 261–272; sequence CPSGNNSTVKEI. A helical transmembrane segment spans residues 273–292; the sequence is AMAMMYTVVTPMLNPFIYSL. The Cytoplasmic portion of the chain corresponds to 293–312; the sequence is RNRDMKRALIRVICTKKISL.

The protein belongs to the G-protein coupled receptor 1 family. In terms of tissue distribution, olfactory epithelium.

It localises to the cell membrane. In terms of biological role, odorant receptor. This Rattus norvegicus (Rat) protein is Olfactory receptor 1500 (Olr1500).